Reading from the N-terminus, the 369-residue chain is Ribosome-interacting GTPase 1 (369 aa).

Ser-2 bears the N-acetylserine mark. Residues 66–292 (ASVGFVGFPS…LLQVMWDRLN (227 aa)) enclose the OBG-type G domain. GTP contacts are provided by residues 72–79 (GFPSVGKS), 118–122 (DLPGI), and 250–253 (NKID). Residues 292–368 (NLVRIYTKPK…EDEDVVTILK (77 aa)) enclose the TGS domain.

Belongs to the TRAFAC class OBG-HflX-like GTPase superfamily. OBG GTPase family. Associates with translating polyribosomes. Interacts with GIR2, TMA46, YAP1 and YGR250C.

Its subcellular location is the cytoplasm. In terms of biological role, involved in ribosomal function. This is Ribosome-interacting GTPase 1 (RBG1) from Saccharomyces cerevisiae (strain ATCC 204508 / S288c) (Baker's yeast).